The sequence spans 218 residues: MKTIANESSLLDTKVPEPTLRRLPWYLSYVQLLHADGCESVSSTRIARAVGVDASLVAKDLSYVSVDGRTRVGYRVADMVAVLNDFLGFTHHHRAFLFGVGSLGAALLQDSGLRHFGLEIAAGFDVNPDIVDTNINGIPVYHKSRVAELCARERVDIGILTVPIRAAQSMADEMIAAGIKAIWNFTPWRISVPEGVVVQNTSMYAQLAVMFNRMKSLP.

Positions 25–64 (WYLSYVQLLHADGCESVSSTRIARAVGVDASLVAKDLSYV) form a DNA-binding region, H-T-H motif. 99-104 (GVGSLG) provides a ligand contact to NAD(+).

It belongs to the transcriptional regulatory Rex family. As to quaternary structure, homodimer.

The protein localises to the cytoplasm. In terms of biological role, modulates transcription in response to changes in cellular NADH/NAD(+) redox state. This is Redox-sensing transcriptional repressor Rex from Porphyromonas gingivalis (strain ATCC 33277 / DSM 20709 / CIP 103683 / JCM 12257 / NCTC 11834 / 2561).